A 310-amino-acid polypeptide reads, in one-letter code: MRGKKRKTVCKAKGKLTSKSCMCTKANARYTCNCFSKTLPFNEKAIKCTIPEKINSEINISKSEMLLKADKYTNAIYKHSKLRKIFKAVKENLSTTNFATKSKGIVHSNFNDSKPIHSPEIKNYTDFNCDFMHPCGLCSPKNFLSEVYKLLRFYNSTVVQIQVYSRNGLLVNSLHEKLMEIANLIVNKGEQTVSETFFHEQKTAIAINRFLRGTVPHTELTRKEAMMPVNVNSKHRKNSGVYSLYINAPTEKDLFCAAHLCVQFSIRYPADILLNVSKLTQPLLLKEHLIIYNTFNRYIYWDDYGKLLKT.

The protein belongs to the herpesviridae U84 family.

The protein is Protein U84 (U84) of Human herpesvirus 7 (strain JI) (HHV-7).